Consider the following 819-residue polypeptide: Leucine--tRNA ligase (819 aa).

Positions 42 to 52 match the 'HIGH' region motif; that stretch reads PYPSGRLHMGH. Residues 577–581 carry the 'KMSKS' region motif; it reads KMSKS. K580 provides a ligand contact to ATP.

This sequence belongs to the class-I aminoacyl-tRNA synthetase family.

Its subcellular location is the cytoplasm. It catalyses the reaction tRNA(Leu) + L-leucine + ATP = L-leucyl-tRNA(Leu) + AMP + diphosphate. In Saccharophagus degradans (strain 2-40 / ATCC 43961 / DSM 17024), this protein is Leucine--tRNA ligase.